We begin with the raw amino-acid sequence, 378 residues long: UPF0754 membrane protein SH1116 (378 aa).

A run of 2 helical transmembrane segments spans residues 4-24 and 358-378; these read FLVI…TNVI and SLGF…AIFV.

Belongs to the UPF0754 family.

The protein resides in the cell membrane. In Staphylococcus haemolyticus (strain JCSC1435), this protein is UPF0754 membrane protein SH1116.